Consider the following 2324-residue polypeptide: Myomegalin (2324 aa).

4 coiled-coil regions span residues 41–132, 158–205, 238–288, and 348–638; these read REDV…LVEA, QVKL…LLEE, DSHL…SLKE, and LFCS…NKQA. 2 disordered regions span residues 72-96 and 205-240; these read TWAD…EPQQ and EPGG…SDSH. A compositionally biased stretch (basic and acidic residues) spans 85-96; that stretch reads AELRRQVEEPQQ. Over residues 219-238 the composition is skewed to polar residues; the sequence is PTQQKPDLNETPTTQPSVSD. The segment at 701-747 is disordered; sequence PAGATSVGPHHGEQTDQGSTQMPSRDDSTSLTAREEASIPRSTLGDS. A Phosphothreonine modification is found at T705. Positions 724-738 are enriched in basic and acidic residues; the sequence is SRDDSTSLTAREEAS. Coiled coils occupy residues 745 to 822, 855 to 923, and 1011 to 1043; these read GDSD…QLVD, ENRR…EEVL, and LRAE…GFSS. Disordered regions lie at residues 1155-1182 and 1195-1216; these read LPSS…SLKL and NKSQ…STKH. Coiled-coil stretches lie at residues 1213–1241, 1346–1384, and 1430–1455; these read STKH…SEAT, TSDD…LSAT, and GLQA…PKTG. Disordered stretches follow at residues 1540–1559, 1589–1610, 1628–1685, 1742–1773, 1857–1877, and 2081–2140; these read TDRL…KEEA, RFSS…SSTS, YTHY…IPKP, APPT…SPAR, LSST…GLES, and NQQP…TPPK. The 92-residue stretch at 1550–1641 folds into the Olduvai domain; that stretch reads KDHKSEKEEA…EEKKPSPSNS (92 aa). Composition is skewed to low complexity over residues 1591-1610 and 1637-1646; these read SSPP…SSTS and SPSNSAASAS. A compositionally biased stretch (polar residues) spans 1743–1767; the sequence is PPTSTSTLLSNHTEASSPRYSNPAQ. Positions 1821-2056 form a coiled coil; the sequence is GADLLEEHLG…LRLQLEQQMD (236 aa). Polar residues-rich tracts occupy residues 2081 to 2090 and 2108 to 2135; these read NQQPPFQGSA and PSNS…SAAT. A coiled-coil region spans residues 2248-2274; the sequence is EEGNLMEKELLDLRAQVSQQQQLLQST.

In terms of assembly, interacts with PDE4D. May interact with MAPRE1 and MAPRE3. May form a pericentrosomal complex with AKAP9, CDK5RAP2 and EB1/MAPRE1 in an isoform-specific manner; within this complex, may mediate MAPRE1-binding to CDK5RAP2. Interaction with AKAP9 stabilizes both proteins. May interact with CAMSAP2 in an isoform-specific manner; this interaction is much stronger in the presence of AKAP9. In complex with AKAP9, recruits CAMSAP2 to the Golgi apparatus. May interact with unglycosylated LGALS3BP in an isoform-specific manner; this interaction may connect the pericentrosomal complex to the gamma-tubulin ring complex (gamma-TuRC) to promote microtubule assembly and acetylation. As to expression, abundantly expressed in heart and skeletal muscle and to a lower extent in brain, lung and liver. Expressed in heart, skeletal muscle and testis (at protein level).

It localises to the cytoplasm. The protein resides in the cytoskeleton. The protein localises to the microtubule organizing center. It is found in the centrosome. Its subcellular location is the golgi apparatus. Its function is as follows. Functions as an anchor sequestering components of the cAMP-dependent pathway to Golgi and/or centrosomes. May participate in microtubule dynamics, promoting microtubule assembly, in an isoform-specific manner. Depending upon the cell context, may act at the level of the Golgi apparatus or that of the centrosome. In complex with AKAP9, recruits CAMSAP2 to the Golgi apparatus and tethers non-centrosomal minus-end microtubules to the Golgi, an important step for polarized cell movement. In complex with AKAP9, EB1/MAPRE1 and CDK5RAP2, contributes to microtubules nucleation and extension from the centrosome to the cell periphery, a crucial process for directed cell migration, mitotic spindle orientation and cell-cycle progression. The chain is Myomegalin (Pde4dip) from Rattus norvegicus (Rat).